The following is a 92-amino-acid chain: UPF0223 protein SGO_1052 (92 aa).

This sequence belongs to the UPF0223 family.

The protein is UPF0223 protein SGO_1052 of Streptococcus gordonii (strain Challis / ATCC 35105 / BCRC 15272 / CH1 / DL1 / V288).